The primary structure comprises 619 residues: 1-deoxy-D-xylulose-5-phosphate synthase (619 aa).

Residues histidine 74 and 115–117 (GHS) contribute to the thiamine diphosphate site. Residue aspartate 146 coordinates Mg(2+). Thiamine diphosphate is bound by residues 147-148 (GA), asparagine 175, and tyrosine 285. Asparagine 175 contacts Mg(2+). A disordered region spans residues 289–310 (EKSPSKYHGIPPSNDKKEEPNK). Glutamate 365 serves as a coordination point for thiamine diphosphate.

It belongs to the transketolase family. DXPS subfamily. In terms of assembly, homodimer. Mg(2+) is required as a cofactor. It depends on thiamine diphosphate as a cofactor.

It carries out the reaction D-glyceraldehyde 3-phosphate + pyruvate + H(+) = 1-deoxy-D-xylulose 5-phosphate + CO2. It functions in the pathway metabolic intermediate biosynthesis; 1-deoxy-D-xylulose 5-phosphate biosynthesis; 1-deoxy-D-xylulose 5-phosphate from D-glyceraldehyde 3-phosphate and pyruvate: step 1/1. Catalyzes the acyloin condensation reaction between C atoms 2 and 3 of pyruvate and glyceraldehyde 3-phosphate to yield 1-deoxy-D-xylulose-5-phosphate (DXP). The protein is 1-deoxy-D-xylulose-5-phosphate synthase of Clostridium botulinum (strain Alaska E43 / Type E3).